The sequence spans 304 residues: Dihydroorotate dehydrogenase B (NAD(+)), catalytic subunit (304 aa).

FMN contacts are provided by residues Ser22 and 46-47 (KG). Residues Lys46 and 70–74 (NAIGL) each bind substrate. FMN contacts are provided by Asn100 and Asn128. Substrate is bound at residue Asn128. The active-site Nucleophile is Cys131. Residues Lys166 and Ile192 each contribute to the FMN site. Substrate is bound at residue 193-194 (NT). FMN is bound by residues Gly218, 244-245 (GG), and 266-267 (GT).

This sequence belongs to the dihydroorotate dehydrogenase family. Type 1 subfamily. Heterotetramer of 2 PyrK and 2 PyrD type B subunits. Requires FMN as cofactor.

The protein localises to the cytoplasm. It carries out the reaction (S)-dihydroorotate + NAD(+) = orotate + NADH + H(+). The protein operates within pyrimidine metabolism; UMP biosynthesis via de novo pathway; orotate from (S)-dihydroorotate (NAD(+) route): step 1/1. Its function is as follows. Catalyzes the conversion of dihydroorotate to orotate with NAD(+) as electron acceptor. The sequence is that of Dihydroorotate dehydrogenase B (NAD(+)), catalytic subunit (pyrD) from Trichlorobacter lovleyi (strain ATCC BAA-1151 / DSM 17278 / SZ) (Geobacter lovleyi).